The sequence spans 295 residues: Proline-rich proteoglycan 2 (295 aa).

An N-terminal signal peptide occupies residues 1 to 16; that stretch reads MLVVLLTAALLVLSSA. A disordered region spans residues 16 to 295; the sequence is AQGVDEEVVY…QSSFLWSFSA (280 aa). A compositionally biased stretch (low complexity) spans 26–41; sequence EDSSQQLELEQQSQGH. Positions 48–58 are enriched in pro residues; sequence PPPGGLPPRPP. Residues 62–78 are compositionally biased toward acidic residues; the sequence is ENGDGDDNDDGDDDGSG. Composition is skewed to pro residues over residues 100 to 187 and 194 to 278; these read PPPA…PPGG and QGPP…PQGP.

Contains glycosaminoglycans of chondroitin-sulfate and heparan types.

The protein resides in the secreted. The protein is Proline-rich proteoglycan 2 (Prpg2) of Rattus norvegicus (Rat).